The sequence spans 1806 residues: Non-reducing polyketide synthase pks12 (1806 aa).

In terms of domain architecture, Starter acyltransferase (SAT) spans 30–191 (TDTMSGMISL…TKLHLRGKVH (162 aa)). The region spanning 330–755 (ENAIAIVGAG…GSNSALICGE (426 aa)) is the Ketosynthase family 3 (KS3) domain. Catalysis depends on for beta-ketoacyl synthase activity residues cysteine 504, histidine 639, and histidine 678. Positions 860–1156 (LAFSGQSKQT…HNPSQHTFLG (297 aa)) are malonyl-CoA:ACP transacylase (MAT) domain. Residues 862 to 1147 (FSGQSKQTIG…IIPMVKRATH (286 aa)) enclose the Malonyl-CoA:ACP transacylase (MAT) domain. The active-site For acyl/malonyl transferase activity is the serine 947. Residues 1249–1383 (PQTPPLKLVT…GRFSVTSHID (135 aa)) form an N-terminal hotdog fold region. The PKS/mFAS DH domain maps to 1249–1558 (PQTPPLKLVT…FSRFPIAKLE (310 aa)). The segment at 1249–1558 (PQTPPLKLVT…FSRFPIAKLE (310 aa)) is product template (PT) domain. Catalysis depends on histidine 1288, which acts as the Proton acceptor; for dehydratase activity. Residues 1404–1558 (SERLMAGRAY…FSRFPIAKLE (155 aa)) form a C-terminal hotdog fold region. Aspartate 1468 functions as the Proton donor; for dehydratase activity in the catalytic mechanism. The 78-residue stretch at 1727-1804 (QSKLRIRQRI…ELVDYVVISS (78 aa)) folds into the Carrier domain. Residue serine 1764 is modified to O-(pantetheine 4'-phosphoryl)serine.

Pantetheine 4'-phosphate serves as cofactor.

The protein operates within secondary metabolite biosynthesis. Non-reducing polyketide synthase; part of the gene cluster that mediates the biosynthesis of mitorubrinol and mitorubrinic acid, two virulence factors that improve T.marneffei intracellular survival in macrophages. The two polyketide synthases pks12 and pks11 are probably responsible for sequential use in the biosynthesis of mitorubrinol and mitorubrinic acid. The first part of the biosynthesis is probably catalyzed by pks12, which synthesized orsellinic acid. This tetraketide is then used as a starter unit for pks11, which possesses a SAT domain, in the second part of the biosynthesis. Pks11, contains a methyltransferase domain, also served that methylates the products, using a methyl group from S-adenosylmethionine. This is Non-reducing polyketide synthase pks12 from Talaromyces marneffei (Penicillium marneffei).